We begin with the raw amino-acid sequence, 146 residues long: Large ribosomal subunit protein mL49 (146 aa).

The N-terminal 38 residues, 1–38 (MISSCVTRCFGRGKCLPGPATASIYQTIRCISTNSNKA), are a transit peptide targeting the mitochondrion.

It belongs to the mitochondrion-specific ribosomal protein mL49 family. Component of the mitochondrial large ribosomal subunit (mt-LSU). Mature yeast 74S mitochondrial ribosomes consist of a small (37S) and a large (54S) subunit. The 37S small subunit contains a 15S ribosomal RNA (15S mt-rRNA) and 34 different proteins. The 54S large subunit contains a 21S rRNA (21S mt-rRNA) and 46 different proteins.

Its subcellular location is the mitochondrion. Functionally, component of the mitochondrial ribosome (mitoribosome), a dedicated translation machinery responsible for the synthesis of mitochondrial genome-encoded proteins, including at least some of the essential transmembrane subunits of the mitochondrial respiratory chain. The mitoribosomes are attached to the mitochondrial inner membrane and translation products are cotranslationally integrated into the membrane. In Saccharomyces cerevisiae (strain ATCC 204508 / S288c) (Baker's yeast), this protein is Large ribosomal subunit protein mL49 (IMG2).